The sequence spans 378 residues: MSESQSASRDALRRARRVVVKIGSALLTNDGRGLDADAIGEWVDQIAALHARGIEVVLVSSGAVAEGMARLGWVTRPSAVHELQAAAAVGQSGLSQCYEEHFARHGLRSAQVLLTHDDLSNRKRYLNARSALRSLVALRVVPVINENDTVVTDEIRFGDNDTLGALVANLLEADALVLLTDQEGLFDADPRHDPEARLIAEGRADDPALAAVAGDGGALGRGGMATKVRAARLAARSGALTAIASGRQPEVLTRLMQGETLGTLLMPDHAPLAARKRWLAGQLQVRGTLVLDAGAVKVLREHGSSLLPVGVRRVEGEFKRGDMLVCVDEQGQRIAKGLVNYGSDEARRIMGQPSRRIEELLGYMESPELIHRDNLVIV.

Position 21 (Lys-21) interacts with ATP. Ser-61, Asp-148, and Asn-160 together coordinate substrate. 180-181 (TD) contributes to the ATP binding site. The 79-residue stretch at 286–364 (RGTLVLDAGA…RRIEELLGYM (79 aa)) folds into the PUA domain.

This sequence belongs to the glutamate 5-kinase family.

Its subcellular location is the cytoplasm. It catalyses the reaction L-glutamate + ATP = L-glutamyl 5-phosphate + ADP. It functions in the pathway amino-acid biosynthesis; L-proline biosynthesis; L-glutamate 5-semialdehyde from L-glutamate: step 1/2. Catalyzes the transfer of a phosphate group to glutamate to form L-glutamate 5-phosphate. This Chromohalobacter salexigens (strain ATCC BAA-138 / DSM 3043 / CIP 106854 / NCIMB 13768 / 1H11) protein is Glutamate 5-kinase.